Reading from the N-terminus, the 721-residue chain is Pre-mRNA-splicing ATP-dependent RNA helicase PRP28 (721 aa).

The segment at 12-134 (KKAADTAAAK…SAEDIEATLL (123 aa)) is disordered. The segment covering 26–63 (PKAERERLAAEKAKKEEDDKKRKASEEEQKRKEEEQKW) has biased composition (basic and acidic residues). The span at 64-77 (RSNGSSRPNESNGS) shows a compositional bias: polar residues. Residues 88–104 (NDGRDDRERDRDRDQGR) show a composition bias toward basic and acidic residues. A Q motif motif is present at residues 288–316 (RSWQESNLPQRLLNIVDDVGYKDPSPIQR). Residues 319 to 522 (IPIALQARDL…KKYLRRPAIV (204 aa)) enclose the Helicase ATP-binding domain. 332–339 (AVTGSGKT) provides a ligand contact to ATP. Residues 445 to 448 (DEAD) carry the DEAD box motif. A Helicase C-terminal domain is found at 533 to 696 (TVEQRVEFVS…KVPEELRRHE (164 aa)). The tract at residues 685-721 (ISKVPEELRRHEAAQSKPVRGAKKDKDEGSGKGNWQH) is disordered. Residues 688–698 (VPEELRRHEAA) are compositionally biased toward basic and acidic residues.

The protein belongs to the DEAD box helicase family. DDX23/PRP28 subfamily. In terms of assembly, component of the U5 snRNP complex.

Its subcellular location is the cytoplasm. The protein resides in the nucleus. It catalyses the reaction ATP + H2O = ADP + phosphate + H(+). ATP-dependent RNA helicase involved in mRNA splicing. May destabilize the U1/5'-splice site duplex to permit an effective competition for the 5'-splice site by the U6 snRNA, resulting in the switch between U1 and U6 at the 5'-splice site. May also act to unwind the U4/U6 base-pairing interaction in the U4/U6/U5 snRNP, facilitating the first covalent step of splicing. The sequence is that of Pre-mRNA-splicing ATP-dependent RNA helicase PRP28 (PRP28) from Gibberella zeae (strain ATCC MYA-4620 / CBS 123657 / FGSC 9075 / NRRL 31084 / PH-1) (Wheat head blight fungus).